The chain runs to 142 residues: MTIFIGSDVAGQRLKDVVKTFLKENNHDVVDVTEGKELDFVDSTLAVVHEVQKNDDNLGIAVDAYGAGSFIVATKVKGMIAAEVSDERSAYMTRSHNNACMITMGSEIVGDTLAKNIAKEFVNGHYDGGRHQIRVDMLNKMC.

The protein belongs to the LacAB/RpiB family. Heteromultimeric protein consisting of LacA and LacB.

It catalyses the reaction aldehydo-D-galactose 6-phosphate = keto-D-tagatose 6-phosphate. The protein operates within carbohydrate metabolism; D-galactose 6-phosphate degradation; D-tagatose 6-phosphate from D-galactose 6-phosphate: step 1/1. The polypeptide is Galactose-6-phosphate isomerase subunit LacA (Staphylococcus haemolyticus (strain JCSC1435)).